A 443-amino-acid polypeptide reads, in one-letter code: Signal recognition particle 54 kDa protein (443 aa).

GTP-binding positions include 107–114 (GVQGSGKT), 189–193 (DTAGR), and 247–250 (TKLD).

The protein belongs to the GTP-binding SRP family. SRP54 subfamily. As to quaternary structure, part of the signal recognition particle protein translocation system, which is composed of SRP and FtsY. Archaeal SRP consists of a 7S RNA molecule of 300 nucleotides and two protein subunits: SRP54 and SRP19.

It localises to the cytoplasm. The enzyme catalyses GTP + H2O = GDP + phosphate + H(+). Involved in targeting and insertion of nascent membrane proteins into the cytoplasmic membrane. Binds to the hydrophobic signal sequence of the ribosome-nascent chain (RNC) as it emerges from the ribosomes. The SRP-RNC complex is then targeted to the cytoplasmic membrane where it interacts with the SRP receptor FtsY. This chain is Signal recognition particle 54 kDa protein, found in Pyrococcus abyssi (strain GE5 / Orsay).